Here is a 421-residue protein sequence, read N- to C-terminus: Acetate kinase (421 aa).

N7 contributes to the Mg(2+) binding site. An ATP-binding site is contributed by K14. R91 provides a ligand contact to substrate. Catalysis depends on D148, which acts as the Proton donor/acceptor. ATP-binding positions include 208-212 and 283-285; these read HIGNG and DRR. Residue E387 participates in Mg(2+) binding.

The protein belongs to the acetokinase family. In terms of assembly, homodimer. The cofactor is Mg(2+). It depends on Mn(2+) as a cofactor.

Its subcellular location is the cytoplasm. It catalyses the reaction acetate + ATP = acetyl phosphate + ADP. Its pathway is metabolic intermediate biosynthesis; acetyl-CoA biosynthesis; acetyl-CoA from acetate: step 1/2. Functionally, catalyzes the formation of acetyl phosphate from acetate and ATP. Can also catalyze the reverse reaction. In Trichlorobacter lovleyi (strain ATCC BAA-1151 / DSM 17278 / SZ) (Geobacter lovleyi), this protein is Acetate kinase.